We begin with the raw amino-acid sequence, 99 residues long: Nucleoid-associated protein UPA3_0088 (99 aa).

This sequence belongs to the YbaB/EbfC family. In terms of assembly, homodimer.

The protein resides in the cytoplasm. The protein localises to the nucleoid. Functionally, binds to DNA and alters its conformation. May be involved in regulation of gene expression, nucleoid organization and DNA protection. In Ureaplasma parvum serovar 3 (strain ATCC 27815 / 27 / NCTC 11736), this protein is Nucleoid-associated protein UPA3_0088.